The chain runs to 38 residues: Photosystem II reaction center protein L (38 aa).

The helical transmembrane segment at 17-37 (SLFWGLLLIFILAVLFSSYFF) threads the bilayer.

Belongs to the PsbL family. In terms of assembly, PSII is composed of 1 copy each of membrane proteins PsbA, PsbB, PsbC, PsbD, PsbE, PsbF, PsbH, PsbI, PsbJ, PsbK, PsbL, PsbM, PsbT, PsbX, PsbY, PsbZ, Psb30/Ycf12, at least 3 peripheral proteins of the oxygen-evolving complex and a large number of cofactors. It forms dimeric complexes.

It is found in the plastid. It localises to the chloroplast thylakoid membrane. Its function is as follows. One of the components of the core complex of photosystem II (PSII). PSII is a light-driven water:plastoquinone oxidoreductase that uses light energy to abstract electrons from H(2)O, generating O(2) and a proton gradient subsequently used for ATP formation. It consists of a core antenna complex that captures photons, and an electron transfer chain that converts photonic excitation into a charge separation. This subunit is found at the monomer-monomer interface and is required for correct PSII assembly and/or dimerization. This is Photosystem II reaction center protein L from Guillardia theta (Cryptophyte).